The sequence spans 80 residues: MTNVGDQGVDAVFGVIYPPQVALVSFGKPAQRVCAVDGAIHVMTTVLATLPADHGCSDDHRGALFFLSINELTRCAAVTG.

The protein belongs to the 2-oxoacid dehydrogenase family.

This is an uncharacterized protein from Mycobacterium tuberculosis (strain CDC 1551 / Oshkosh).